An 87-amino-acid chain; its full sequence is LYR motif-containing protein 2 (87 aa).

The N-terminal 19 residues, 1–19, are a transit peptide targeting the mitochondrion; sequence MGSRLPPAALTLKQFLVRQ.

It belongs to the complex I LYR family.

The protein resides in the mitochondrion. In terms of biological role, involved in efficient integration of the N-module into mitochondrial respiratory chain complex I. The protein is LYR motif-containing protein 2 (lyrm2) of Xenopus laevis (African clawed frog).